Reading from the N-terminus, the 286-residue chain is Lipoyl synthase (286 aa).

Positions 29, 34, 40, 55, 59, 62, and 265 each coordinate [4Fe-4S] cluster. Positions 41 to 254 (WGSGTATFMI…EKIAYSLGFS (214 aa)) constitute a Radical SAM core domain.

This sequence belongs to the radical SAM superfamily. Lipoyl synthase family. [4Fe-4S] cluster serves as cofactor.

The protein resides in the cytoplasm. It carries out the reaction [[Fe-S] cluster scaffold protein carrying a second [4Fe-4S](2+) cluster] + N(6)-octanoyl-L-lysyl-[protein] + 2 oxidized [2Fe-2S]-[ferredoxin] + 2 S-adenosyl-L-methionine + 4 H(+) = [[Fe-S] cluster scaffold protein] + N(6)-[(R)-dihydrolipoyl]-L-lysyl-[protein] + 4 Fe(3+) + 2 hydrogen sulfide + 2 5'-deoxyadenosine + 2 L-methionine + 2 reduced [2Fe-2S]-[ferredoxin]. Its pathway is protein modification; protein lipoylation via endogenous pathway; protein N(6)-(lipoyl)lysine from octanoyl-[acyl-carrier-protein]: step 2/2. Catalyzes the radical-mediated insertion of two sulfur atoms into the C-6 and C-8 positions of the octanoyl moiety bound to the lipoyl domains of lipoate-dependent enzymes, thereby converting the octanoylated domains into lipoylated derivatives. This chain is Lipoyl synthase, found in Sulfolobus acidocaldarius (strain ATCC 33909 / DSM 639 / JCM 8929 / NBRC 15157 / NCIMB 11770).